A 448-amino-acid polypeptide reads, in one-letter code: Ribosomal protein uS12 methylthiotransferase RimO (448 aa).

In terms of domain architecture, MTTase N-terminal spans 7–123 (EKVSLVSLGC…IAEIIAEKKQ (117 aa)). [4Fe-4S] cluster contacts are provided by Cys16, Cys52, Cys86, Cys161, Cys165, and Cys168. A Radical SAM core domain is found at 147-377 (SSPHYTAYLK…MRTQARVSFK (231 aa)). The TRAM domain occupies 380–448 (RTLVDSEEDV…DYDLIGEIVD (69 aa)).

It belongs to the methylthiotransferase family. RimO subfamily. Requires [4Fe-4S] cluster as cofactor.

Its subcellular location is the cytoplasm. It carries out the reaction L-aspartate(89)-[ribosomal protein uS12]-hydrogen + (sulfur carrier)-SH + AH2 + 2 S-adenosyl-L-methionine = 3-methylsulfanyl-L-aspartate(89)-[ribosomal protein uS12]-hydrogen + (sulfur carrier)-H + 5'-deoxyadenosine + L-methionine + A + S-adenosyl-L-homocysteine + 2 H(+). Catalyzes the methylthiolation of an aspartic acid residue of ribosomal protein uS12. This chain is Ribosomal protein uS12 methylthiotransferase RimO, found in Citrifermentans bemidjiense (strain ATCC BAA-1014 / DSM 16622 / JCM 12645 / Bem) (Geobacter bemidjiensis).